We begin with the raw amino-acid sequence, 339 residues long: Ketol-acid reductoisomerase (NADP(+)) (339 aa).

The 182-residue stretch at 1–182 (MKIYYEKDAD…GNTRAGVIET (182 aa)) folds into the KARI N-terminal Rossmann domain. NADP(+) is bound by residues 24 to 27 (YGSQ), S51, S53, and 83 to 86 (DEKQ). H108 is a catalytic residue. An NADP(+)-binding site is contributed by G134. Residues 183–328 (SFREETETDL…EKLRGMMHWA (146 aa)) form the KARI C-terminal knotted domain. Mg(2+) is bound by residues D191, E195, E227, and E231. S252 is a substrate binding site.

Belongs to the ketol-acid reductoisomerase family. Requires Mg(2+) as cofactor.

The catalysed reaction is (2R)-2,3-dihydroxy-3-methylbutanoate + NADP(+) = (2S)-2-acetolactate + NADPH + H(+). The enzyme catalyses (2R,3R)-2,3-dihydroxy-3-methylpentanoate + NADP(+) = (S)-2-ethyl-2-hydroxy-3-oxobutanoate + NADPH + H(+). It participates in amino-acid biosynthesis; L-isoleucine biosynthesis; L-isoleucine from 2-oxobutanoate: step 2/4. It functions in the pathway amino-acid biosynthesis; L-valine biosynthesis; L-valine from pyruvate: step 2/4. Involved in the biosynthesis of branched-chain amino acids (BCAA). Catalyzes an alkyl-migration followed by a ketol-acid reduction of (S)-2-acetolactate (S2AL) to yield (R)-2,3-dihydroxy-isovalerate. In the isomerase reaction, S2AL is rearranged via a Mg-dependent methyl migration to produce 3-hydroxy-3-methyl-2-ketobutyrate (HMKB). In the reductase reaction, this 2-ketoacid undergoes a metal-dependent reduction by NADPH to yield (R)-2,3-dihydroxy-isovalerate. This Hyphomonas neptunium (strain ATCC 15444) protein is Ketol-acid reductoisomerase (NADP(+)).